The following is a 702-amino-acid chain: Elongation factor G (702 aa).

The 283-residue stretch at 8–290 (TRYRNIGISA…AVIEYLPAPT (283 aa)) folds into the tr-type G domain. Residues 17-24 (AHIDAGKT), 88-92 (DTPGH), and 142-145 (NKMD) each bind GTP.

Belongs to the TRAFAC class translation factor GTPase superfamily. Classic translation factor GTPase family. EF-G/EF-2 subfamily.

Its subcellular location is the cytoplasm. Its function is as follows. Catalyzes the GTP-dependent ribosomal translocation step during translation elongation. During this step, the ribosome changes from the pre-translocational (PRE) to the post-translocational (POST) state as the newly formed A-site-bound peptidyl-tRNA and P-site-bound deacylated tRNA move to the P and E sites, respectively. Catalyzes the coordinated movement of the two tRNA molecules, the mRNA and conformational changes in the ribosome. The sequence is that of Elongation factor G from Erwinia tasmaniensis (strain DSM 17950 / CFBP 7177 / CIP 109463 / NCPPB 4357 / Et1/99).